The primary structure comprises 228 residues: uncharacterized protein (228 aa).

4 helical membrane passes run 37–54 (WCMHASLTLVLLALTLIV), 67–89 (VVSIYLAFFFSLKILHTFFSTGV), 104–126 (HIGIRLFLLLCASSLFYACTSRL), and 138–160 (VLHVRSTAYTTPCAVYVMMLVLY).

Its subcellular location is the cell membrane. This is an uncharacterized protein from Treponema pallidum (strain Nichols).